The sequence spans 20 residues: Protein C activator (20 aa).

The 20-residue stretch at 1-20 (VVGGDECNINEHRSLALMYA) folds into the Peptidase S1 domain.

This sequence belongs to the peptidase S1 family. Snake venom subfamily. As to quaternary structure, monomer. Glycosylated. Expressed by the venom gland.

The protein resides in the secreted. Inhibited by calcium. In terms of biological role, snake venom serine protease that selectively cleaves the heavy chain of protein C (PROC). This activation is thrombomodulin-independent. In Agkistrodon bilineatus (Cantil), this protein is Protein C activator.